Here is a 147-residue protein sequence, read N- to C-terminus: Putative HTH-type transcriptional regulator slr0846 (147 aa).

Positions 2-130 (KLTTKSHYSV…YSITLADLYY (129 aa)) constitute an HTH rrf2-type domain.

The chain is Putative HTH-type transcriptional regulator slr0846 from Synechocystis sp. (strain ATCC 27184 / PCC 6803 / Kazusa).